Reading from the N-terminus, the 479-residue chain is Anaerobic nitric oxide reductase flavorubredoxin (479 aa).

A zinc metallo-hydrolase region spans residues 30–210 (LRGSSYNSYL…PFSRLVTPKI (181 aa)). Fe cation is bound by residues histidine 79, glutamate 81, aspartate 83, histidine 147, aspartate 166, and histidine 227. The region spanning 254–393 (ITIFYDTMSN…LCREHGREIA (140 aa)) is the Flavodoxin-like domain. FMN is bound by residues 260–264 (TMSNN) and 342–369 (AFGS…EMSL). Residues 423–474 (GPRMQCSVCQWIYDPAKGEPMQDVAPGTPWSEVPDNFLCPECSLGKDVFEEL) enclose the Rubredoxin-like domain. Cysteine 428, cysteine 431, cysteine 461, and cysteine 464 together coordinate Fe cation.

The protein in the N-terminal section; belongs to the zinc metallo-hydrolase group 3 family. Homotetramer. Fe cation is required as a cofactor. FMN serves as cofactor.

The protein localises to the cytoplasm. It participates in nitrogen metabolism; nitric oxide reduction. In terms of biological role, anaerobic nitric oxide reductase; uses NADH to detoxify nitric oxide (NO), protecting several 4Fe-4S NO-sensitive enzymes. Has at least 2 reductase partners, only one of which (NorW, flavorubredoxin reductase) has been identified. NO probably binds to the di-iron center; electrons enter from the NorW at rubredoxin and are transferred sequentially to the FMN center and the di-iron center. Also able to function as an aerobic oxygen reductase. The sequence is that of Anaerobic nitric oxide reductase flavorubredoxin from Escherichia coli O139:H28 (strain E24377A / ETEC).